The chain runs to 823 residues: Probable inorganic carbon transporter subunit DabA (823 aa).

The Zn(2+) site is built by Cys-361, Asp-363, His-527, and Cys-542.

Belongs to the inorganic carbon transporter (TC 9.A.2) DabA family. As to quaternary structure, forms a complex with DabB. Zn(2+) serves as cofactor.

It is found in the cell inner membrane. Its activity is regulated as follows. Intracellular DIC accumulation is sensitive to CCCP (carbonyl cyanide-m-chlorophenylhydrazone) and DCCD (N,N-dicyclohexylcarbodiimide) and therefore likely driven by either proton potential, ATP, or both. Its function is as follows. Part of an energy-coupled inorganic carbon pump. In terms of biological role, probably involved in transport of dissolved inorganic carbon (DIC) with upstream gene dabB (Tcr_0853); has been suggested to be a proton-DIC symporter. This chain is Probable inorganic carbon transporter subunit DabA, found in Hydrogenovibrio crunogenus (strain DSM 25203 / XCL-2) (Thiomicrospira crunogena).